The following is a 420-amino-acid chain: UDP-glucuronic acid decarboxylase 1 (420 aa).

Met-1 bears the N-acetylmethionine mark. Residues 1–19 are Cytoplasmic-facing; sequence MVSKALLRLVSAVNRRRMK. A helical; Signal-anchor for type II membrane protein membrane pass occupies residues 20–40; the sequence is LLLGIALLAYVASVWGNFVNM. Over 41 to 420 the chain is Lumenal; sequence RSIQENGELK…RIKKGRTRHS (380 aa). Thr-94 is modified (phosphothreonine). NAD(+) contacts are provided by Gly-98, Phe-99, Val-100, Asp-119, Asn-120, Phe-122, Thr-123, Gly-124, Asp-144, and Val-145. UDP-alpha-D-glucuronate-binding residues include Leu-149 and Tyr-150. Residues Leu-159 and Ser-161 each contribute to the NAD(+) site. Lys-177 contacts UDP-alpha-D-glucuronate. Position 178 (Thr-178) interacts with NAD(+). UDP-alpha-D-glucuronate is bound by residues Asn-185, Gly-188, Lys-191, and Arg-192. The NAD(+) site is built by Ala-200, Tyr-231, and Lys-235. Catalysis depends on Tyr-231, which acts as the Proton acceptor. UDP-alpha-D-glucuronate contacts are provided by Tyr-245, Gln-248, and Glu-249. Residues Thr-261, His-267, and Arg-272 each coordinate NAD(+). Asn-316 is a glycosylation site (N-linked (GlcNAc...) asparagine).

This sequence belongs to the NAD(P)-dependent epimerase/dehydratase family. UDP-glucuronic acid decarboxylase subfamily. Homodimer and homotetramer. Interacts with AKT1. It depends on NAD(+) as a cofactor.

It is found in the golgi apparatus. The protein resides in the golgi stack membrane. The catalysed reaction is UDP-alpha-D-glucuronate + H(+) = UDP-alpha-D-xylose + CO2. It participates in nucleotide-sugar biosynthesis; UDP-alpha-D-xylose biosynthesis; UDP-alpha-D-xylose from UDP-alpha-D-glucuronate: step 1/1. Functionally, catalyzes the NAD-dependent decarboxylation of UDP-glucuronic acid to UDP-xylose. Necessary for the biosynthesis of the core tetrasaccharide in glycosaminoglycan biosynthesis. This is UDP-glucuronic acid decarboxylase 1 from Homo sapiens (Human).